Here is a 362-residue protein sequence, read N- to C-terminus: Guanine nucleotide-binding protein alpha-10 subunit (362 aa).

G2 is lipidated: N-myristoyl glycine. Residue C4 is the site of S-palmitoyl cysteine attachment. The 328-residue stretch at 35-362 (LEQSVLLIGP…QENLKDTGMI (328 aa)) folds into the G-alpha domain. Residues 38-51 (SVLLIGPGESGKST) are G1 motif. GTP is bound by residues 43-50 (GPGESGKS), 184-190 (VRIRVPT), 209-213 (DCGGQ), 278-281 (NKID), and A335. Residues S50 and T190 each contribute to the Mg(2+) site. Positions 182–190 (DIVRIRVPT) are G2 motif. The interval 205 to 214 (LSVIDCGGQR) is G3 motif. Residues 274 to 281 (ILFLNKID) form a G4 motif region. The G5 motif stretch occupies residues 333 to 337 (TCAIS).

Belongs to the G-alpha family. G proteins are composed of 3 units; alpha, beta and gamma. The alpha chain contains the guanine nucleotide binding site.

Guanine nucleotide-binding proteins (G proteins) are involved as modulators or transducers in various transmembrane signaling systems. This is Guanine nucleotide-binding protein alpha-10 subunit (gpa-10) from Caenorhabditis briggsae.